The primary structure comprises 302 residues: Meiotically up-regulated gene 129 protein (302 aa).

Functionally, has a role in meiosis. This Schizosaccharomyces pombe (strain 972 / ATCC 24843) (Fission yeast) protein is Meiotically up-regulated gene 129 protein (mug129).